The following is a 460-amino-acid chain: Muscarinic acetylcholine receptor M1 (460 aa).

Residues 1–22 are Extracellular-facing; it reads MNTSAPPAVSPNITVLAPGKGP. N-linked (GlcNAc...) asparagine glycosylation is found at N2 and N12. A helical transmembrane segment spans residues 23–48; the sequence is WQVAFIGITTGLLSLATVTGNLLVLI. Over 49–62 the chain is Cytoplasmic; that stretch reads SFKVNTELKTVNNY. A helical transmembrane segment spans residues 63-84; that stretch reads FLLSLACADLIIGTFSMNLYTT. Residues 85 to 95 lie on the Extracellular side of the membrane; the sequence is YLLMGHWALGT. Residues 96–121 traverse the membrane as a helical segment; the sequence is LACDLWLALDYVASNASVMNLLLISF. C98 and C178 form a disulfide bridge. Residues 122–142 are Cytoplasmic-facing; it reads DRYFSVTRPLSYRAKRTPRRA. The helical transmembrane segment at 143-164 threads the bilayer; the sequence is ALMIGLAWLVSFVLWAPAILFW. The Extracellular segment spans residues 165 to 185; the sequence is QYLVGERTVLAGQCYIQFLSQ. The helical transmembrane segment at 186–209 threads the bilayer; sequence PIITFGTAMAAFYLPVTVMCTLYW. Residues 210 to 366 are Cytoplasmic-facing; sequence RIYRETENRA…LVKEKKAART (157 aa). Disordered stretches follow at residues 225–256, 274–296, and 310–351; these read LQGS…ETPP, WKEE…GEEP, and EAQA…QLAK. T230 bears the Phosphothreonine mark. A compositionally biased stretch (low complexity) spans 238 to 247; that stretch reads SSSSERSQPG. Residues 328–343 show a composition bias toward basic residues; that stretch reads RPTRKGRERAGKGQKP. Residues 367–390 traverse the membrane as a helical segment; the sequence is LSAILLAFIVTWTPYNIMVLVSTF. Residues 391–397 lie on the Extracellular side of the membrane; it reads CKDCVPE. Residues 398–420 form a helical membrane-spanning segment; sequence TLWELGYWLCYVNSTINPMCYAL. The Cytoplasmic segment spans residues 421-460; sequence CNKAFRDTFRLLLLCRWDKRRWRKIPKRPGSVHRTPSRQC. T428 carries the phosphothreonine modification. S451 is subject to Phosphoserine. T455 bears the Phosphothreonine mark. S457 carries the phosphoserine modification.

Belongs to the G-protein coupled receptor 1 family. Muscarinic acetylcholine receptor subfamily. CHRM1 sub-subfamily. In terms of assembly, interacts with GPRASP2. Interacts with TMEM147.

The protein localises to the cell membrane. Its subcellular location is the postsynaptic cell membrane. Functionally, the muscarinic acetylcholine receptor mediates various cellular responses, including inhibition of adenylate cyclase, breakdown of phosphoinositides and modulation of potassium channels through the action of G proteins. Primary transducing effect is Pi turnover. The chain is Muscarinic acetylcholine receptor M1 (CHRM1) from Sus scrofa (Pig).